Here is a 150-residue protein sequence, read N- to C-terminus: Small heat shock protein HspE (150 aa).

One can recognise a sHSP domain in the interval 27-137 (VDNGDTYPPY…KPRQIAIDVA (111 aa)).

Belongs to the small heat shock protein (HSP20) family.

This chain is Small heat shock protein HspE (hspE), found in Bradyrhizobium diazoefficiens (strain JCM 10833 / BCRC 13528 / IAM 13628 / NBRC 14792 / USDA 110).